We begin with the raw amino-acid sequence, 330 residues long: NADH-quinone oxidoreductase subunit H (330 aa).

9 consecutive transmembrane segments (helical) span residues Leu5–Leu25, Ile44–Leu64, Phe78–Ile98, Val122–Ala142, Val156–Ile176, Ile192–Phe212, Met240–Ile260, Phe271–Trp293, and Cys310–Ile330.

It belongs to the complex I subunit 1 family. As to quaternary structure, NDH-1 is composed of 14 different subunits. Subunits NuoA, H, J, K, L, M, N constitute the membrane sector of the complex.

Its subcellular location is the cell inner membrane. The enzyme catalyses a quinone + NADH + 5 H(+)(in) = a quinol + NAD(+) + 4 H(+)(out). NDH-1 shuttles electrons from NADH, via FMN and iron-sulfur (Fe-S) centers, to quinones in the respiratory chain. The immediate electron acceptor for the enzyme in this species is believed to be ubiquinone. Couples the redox reaction to proton translocation (for every two electrons transferred, four hydrogen ions are translocated across the cytoplasmic membrane), and thus conserves the redox energy in a proton gradient. This subunit may bind ubiquinone. The polypeptide is NADH-quinone oxidoreductase subunit H (Campylobacter curvus (strain 525.92)).